The chain runs to 431 residues: Histidine--tRNA ligase (431 aa).

It belongs to the class-II aminoacyl-tRNA synthetase family. In terms of assembly, homodimer.

Its subcellular location is the cytoplasm. The catalysed reaction is tRNA(His) + L-histidine + ATP = L-histidyl-tRNA(His) + AMP + diphosphate + H(+). The chain is Histidine--tRNA ligase from Levilactobacillus brevis (strain ATCC 367 / BCRC 12310 / CIP 105137 / JCM 1170 / LMG 11437 / NCIMB 947 / NCTC 947) (Lactobacillus brevis).